The primary structure comprises 55 residues: ATP synthase F(0) complex subunit 8 (55 aa).

A helical membrane pass occupies residues 9-29 (WFFIMIMSWAVFLLLIQPKLL).

The protein belongs to the ATPase protein 8 family. As to quaternary structure, component of the ATP synthase complex composed at least of ATP5F1A/subunit alpha, ATP5F1B/subunit beta, ATP5MC1/subunit c (homooctomer), MT-ATP6/subunit a, MT-ATP8/subunit 8, ATP5ME/subunit e, ATP5MF/subunit f, ATP5MG/subunit g, ATP5MK/subunit k, ATP5MJ/subunit j, ATP5F1C/subunit gamma, ATP5F1D/subunit delta, ATP5F1E/subunit epsilon, ATP5PF/subunit F6, ATP5PB/subunit b, ATP5PD/subunit d, ATP5PO/subunit OSCP. ATP synthase complex consists of a soluble F(1) head domain (subunits alpha(3) and beta(3)) - the catalytic core - and a membrane F(0) domain - the membrane proton channel (subunits c, a, 8, e, f, g, k and j). These two domains are linked by a central stalk (subunits gamma, delta, and epsilon) rotating inside the F1 region and a stationary peripheral stalk (subunits F6, b, d, and OSCP).

The protein localises to the mitochondrion membrane. In terms of biological role, subunit 8, of the mitochondrial membrane ATP synthase complex (F(1)F(0) ATP synthase or Complex V) that produces ATP from ADP in the presence of a proton gradient across the membrane which is generated by electron transport complexes of the respiratory chain. ATP synthase complex consist of a soluble F(1) head domain - the catalytic core - and a membrane F(1) domain - the membrane proton channel. These two domains are linked by a central stalk rotating inside the F(1) region and a stationary peripheral stalk. During catalysis, ATP synthesis in the catalytic domain of F(1) is coupled via a rotary mechanism of the central stalk subunits to proton translocation. In vivo, can only synthesize ATP although its ATP hydrolase activity can be activated artificially in vitro. Part of the complex F(0) domain. This Rhea americana (Greater rhea) protein is ATP synthase F(0) complex subunit 8.